The primary structure comprises 130 residues: Capsid protein (130 aa).

Residues 32-105 form a viral RNA-binding region; sequence EWISSNSRSQ…FATNDDCALI (74 aa).

Belongs to the Leviviricetes capsid protein family. In terms of assembly, homodimer. The capsid proteins form dimers that assemble by group of 5. Twelve such pentamers are linked together with free dimers. The homodimers binds to the viral RNA via an operator hairpin, but also to many other RNA sequences in the viral genome; this interaction probably shifts the virus from the replicative to the assembly phase and ensures specific encapsidation of the viral genome.

The protein localises to the virion. In terms of biological role, capsid protein self-assembles to form an icosahedral capsid with a T=3 symmetry, about 26 nm in diameter, and consisting of 89 capsid proteins dimers (178 capsid proteins). Involved in viral genome encapsidation through the interaction between a capsid protein dimer and the multiple packaging signals present in the RNA genome. The capsid also contains 1 copy of the A2 maturation protein. Acts as a translational repressor of viral replicase synthesis late in infection. This latter function is the result of capsid protein interaction with an RNA hairpin which contains the replicase ribosome-binding site. The sequence is that of Capsid protein from Enterobacteria phage fr (Bacteriophage fr).